The chain runs to 202 residues: High mobility group protein B3 (202 aa).

DNA-binding regions (HMG box) lie at residues 9–79 and 93–161; these read PKGK…KDYG and PKRP…ADYK. 2 positions are modified to cysteine sulfonic acid (-SO3H); alternate: cysteine 23 and cysteine 45. Cysteines 23 and 45 form a disulfide. The segment at 71-98 is disordered; the sequence is YDREMKDYGPAKGGKKKKDPNAPKRPPS. Cysteine 104 carries the post-translational modification Cysteine sulfonic acid (-SO3H). Residues 161-202 are disordered; the sequence is KSKGKFDGAKGAATKAARKKVEEEDEEEEEDEEEEDEDDDDE. Residues 183–202 show a composition bias toward acidic residues; it reads EEDEEEEEDEEEEDEDDDDE.

This sequence belongs to the HMGB family. Post-translationally, reduction/oxidation of cysteine residues Cys-23, Cys-45 and Cys-104 and a possible intramolecular disulfide bond involving Cys-23 and Cys-45 give rise to different redox forms with specific functional activities in various cellular compartments: 1- fully reduced HMGB3 (HMGB3C23hC45hC104h), 2- disulfide HMGB3 (HMGB3C23-C45C104h) and 3- sulfonyl HMGB3 (HMGB3C23soC45soC104so).

It is found in the nucleus. The protein localises to the chromosome. It localises to the cytoplasm. Multifunctional protein with various roles in different cellular compartments. May act in a redox sensitive manner. Associates with chromatin and binds DNA with a preference for non-canonical DNA structures such as single-stranded DNA. Can bend DNA and enhance DNA flexibility by looping thus providing a mechanism to promote activities on various gene promoters. Binds to the delta-1 crystallin/ASL1 enhancer. Proposed to be involved in the innate immune response to nucleic acids by acting as a cytoplasmic promiscuous immunogenic DNA/RNA sensor. This chain is High mobility group protein B3 (HMGB3), found in Gallus gallus (Chicken).